The sequence spans 416 residues: MKVTILGAGVIGVTTAYQLAKAGHDVTVVDRQAGPALETSFANAGEVSFGYCSPWAAPGIPQKALKWLFMKHAPLILRPKVDTAMLSWLVKMLSNCTSERYAVNKSRMLRLADYSRIALAEVRAGTGIAYDQRMQGTLQLFRTEQQLDASAKDVKALAADGIPYEVLDRDGCIRVEPALSHARDKIVGGLLTPKDETGDCFKFTNALAAKAVELGVQFLYGRTIKDLQVEGGQIRGVVTDQGAIASDAVVVALGSYSPLLLKQVGISLPVYPVKGYSLTIPIVDPARSPESTVMDETYKIAITRLGDRIRVGGMAEISGYTNDLGLARRNTLEHSVMDLFPGGDVSKAAFWSGLRPMTPDGTPVIGATKIRGLFLNTGHGTLGWTMSCGSARVISDLVSGHKAEIDTADLSVARYG.

Residue 3-17 (VTILGAGVIGVTTAY) coordinates FAD.

The protein belongs to the DadA oxidoreductase family. FAD serves as cofactor.

The catalysed reaction is a D-alpha-amino acid + A + H2O = a 2-oxocarboxylate + AH2 + NH4(+). Its pathway is amino-acid degradation; D-alanine degradation; NH(3) and pyruvate from D-alanine: step 1/1. Its function is as follows. Oxidative deamination of D-amino acids. The chain is D-amino acid dehydrogenase from Rhizobium rhizogenes (strain K84 / ATCC BAA-868) (Agrobacterium radiobacter).